A 746-amino-acid polypeptide reads, in one-letter code: MIEDSGKRGNTMAERRQLFAEMRAQDLDRIRLSTYRTACKLRFVQKKCNLHLVDIWNVIEALRENALNNLDPNIELNVARLEAVLSTIFYQLNKRMPTTHQIHVEQSISLLLNFLLAAFDPEGHGKISVFAVKMALATLCGGKIMDKLRYIFSMISDSSGVMVYGRYDQFLREVLKLPTAVFEGPSFGYTEQSARSCFSQQKKVTLNGFLDTLMSDPPPQCLVWLPLLHRLANVENVFHPVECSYCHSESMMGFRYRCQQCHNYQLCQDCFWRGHAGGSHSNQHQMKEYTSWKSPAKKLTNALSKSLSCASSREPLHPMFPDQPEKPLNLAHIVPPRPVTSMNDTLFSHSVPSSGSPFITRSSPPKDSEVEQNKMLARAAPAFLKGRGIQYSLNVADRLADEHVLIGLYVNMLRNDPPCMLESSNRLDEEHRLIARYAARLAAESSSSQPTQQRSAPDISFTIDANKQQRQLIAELENKNREILQEIQRLRVEHEQASQPTPEKAQQNPTLLAELRLLRQRKDELEQRMSALQESRRELMVQLEGLMKLLKEEELKQGTQGASSPRSSPSHTISRPIPMPIRSASACPTPTHTPQDSLTGVGGDVQEAFAQSSRRNLRSDLLVAADSITNTMSSLVKELNSEVASETESTVDSEFSRPQFEDLAPSPTSEKAFLAQIHSRKPGYIHGGAASTTHGDMVPEDGDPYTQPEDGNYENESVRQLENELQLEEYLKQKLQDEAYQVSLQG.

The interaction with MAGEE1 stretch occupies residues 1–288 (MIEDSGKRGN…SHSNQHQMKE (288 aa)). Residues 238–294 (FHPVECSYCHSESMMGFRYRCQQCHNYQLCQDCFWRGHAGGSHSNQHQMKEYTSWKS) form a ZZ-type zinc finger. Zn(2+) contacts are provided by Cys-243, Cys-246, Cys-258, Cys-261, Cys-267, Cys-270, His-280, and His-284. Residues 397-447 (DRLADEHVLIGLYVNMLRNDPPCMLESSNRLDEEHRLIARYAARLAAESSS) form a syntrophin-binding region region. Residues 458-557 (DISFTIDANK…KLLKEEELKQ (100 aa)) are a coiled coil. 3 disordered regions span residues 555–577 (LKQG…SRPI), 646–667 (ETES…APSP), and 684–721 (YIHG…VRQL). The segment covering 563 to 576 (SSPRSSPSHTISRP) has biased composition (low complexity). At Ser-666 the chain carries Phosphoserine.

It belongs to the dystrophin family. Dystrobrevin subfamily. In terms of assembly, interacts with dystrophin, utrophin and the syntrophins SNTA1, SNTB1, SNTB2, SNTG1 and SNTG2. Binds dystrobrevin binding protein 1. Interacts with MAGEE1. Interacts with Ctnnal1. The interaction is required for correct localization of both Ctnnal1 and Dtna. Does not interact with utrophin. As to quaternary structure, does not interact with syntrophin. Phosphorylation of isoform 2 on tyrosine kinase substrate domain present in the C-terminus. Expressed in skeletal muscle, heart, lung and brain. Sarcolemma and neuromuscular junction in skeletal muscle. Isoform 2 is restricted to the neuromuscular junction. Isoforms 5 and 6 are only expressed in muscle.

It localises to the cytoplasm. The protein localises to the synapse. Its subcellular location is the cell membrane. Functionally, involved in synapse maturation and required for normal muscle function. This is Dystrobrevin alpha (Dtna) from Mus musculus (Mouse).